Consider the following 283-residue polypeptide: Elongation factor Ts (283 aa).

The tract at residues 79-82 (TDFV) is involved in Mg(2+) ion dislocation from EF-Tu.

The protein belongs to the EF-Ts family.

It localises to the cytoplasm. Functionally, associates with the EF-Tu.GDP complex and induces the exchange of GDP to GTP. It remains bound to the aminoacyl-tRNA.EF-Tu.GTP complex up to the GTP hydrolysis stage on the ribosome. This chain is Elongation factor Ts, found in Shewanella putrefaciens (strain CN-32 / ATCC BAA-453).